The chain runs to 65 residues: Large ribosomal subunit protein bL35 (65 aa).

The interval 1–25 is disordered; that stretch reads MPKMKSHRGAAKRFKKTGTGKLKRA.

This sequence belongs to the bacterial ribosomal protein bL35 family.

This chain is Large ribosomal subunit protein bL35, found in Clostridium botulinum (strain Alaska E43 / Type E3).